A 493-amino-acid chain; its full sequence is 1-aminocyclopropane-1-carboxylate synthase 1 (493 aa).

Lys-279 is modified (N6-(pyridoxal phosphate)lysine).

Belongs to the class-I pyridoxal-phosphate-dependent aminotransferase family. Homodimer. Requires pyridoxal 5'-phosphate as cofactor.

The catalysed reaction is S-adenosyl-L-methionine = 1-aminocyclopropane-1-carboxylate + S-methyl-5'-thioadenosine + H(+). It functions in the pathway alkene biosynthesis; ethylene biosynthesis via S-adenosyl-L-methionine; ethylene from S-adenosyl-L-methionine: step 1/2. Functionally, catalyzes the formation of 1-aminocyclopropane-1-carboxylate, a direct precursor of ethylene in higher plants. In Cucurbita pepo (Vegetable marrow), this protein is 1-aminocyclopropane-1-carboxylate synthase 1 (ACC1A).